We begin with the raw amino-acid sequence, 475 residues long: Ankyrin repeat, SAM and basic leucine zipper domain-containing protein 1 (475 aa).

The interval 1–25 (MAAGALRGLPVAGGGESSESEDDGW) is disordered. 3 positions are modified to phosphoserine: Ser17, Ser18, and Ser20. ANK repeat units lie at residues 45–74 (EKKE…SVDS), 78–107 (YGWT…NASF), 110–144 (DKQS…DPNV), 148–177 (RLMT…EVNT), 181–210 (NGYT…NKML), and 214–243 (DGKM…PLEG). The 63-residue stretch at 272–334 (SYTAFGDLEV…KILAALKELQ (63 aa)) folds into the SAM domain.

Interacts with DDX4, PIWIL1, RANBP9 and TDRD1.

The protein localises to the cytoplasm. Functionally, plays a central role during spermatogenesis by repressing transposable elements and preventing their mobilization, which is essential for the germline integrity. Acts via the piRNA metabolic process, which mediates the repression of transposable elements during meiosis by forming complexes composed of piRNAs and Piwi proteins and governs the methylation and subsequent repression of transposons. Its association with pi-bodies suggests a participation in the primary piRNAs metabolic process. Required prior to the pachytene stage to facilitate the production of multiple types of piRNAs, including those associated with repeats involved in the regulation of retrotransposons. May act by mediating protein-protein interactions during germ cell maturation. This chain is Ankyrin repeat, SAM and basic leucine zipper domain-containing protein 1 (ASZ1), found in Nomascus leucogenys (Northern white-cheeked gibbon).